The chain runs to 1029 residues: FYVE, RhoGEF and PH domain-containing protein tag-77 (1029 aa).

2 stretches are compositionally biased toward basic and acidic residues: residues 1 to 12 and 20 to 39; these read MKYDMNHRKNSD and TVKE…DNRF. Disordered regions lie at residues 1-155, 185-254, and 279-370; these read MKYD…ATSE, VPRM…ERKT, and NNGV…EKDD. Residues 42–56 are compositionally biased toward pro residues; the sequence is QPPPPPSPRRAPPPP. Composition is skewed to low complexity over residues 76–85 and 122–133; these read PPSSSESSEN and SSSTSDVSSQNS. 2 stretches are compositionally biased toward polar residues: residues 141–155 and 200–211; these read SCTT…ATSE and PISQVSTLSQVS. A compositionally biased stretch (acidic residues) spans 212 to 227; that stretch reads DEFDEGDTSASDEESM. Positions 316 to 334 are enriched in low complexity; sequence SPTSGMSSSSTDDFSRITS. Positions 335-347 are enriched in polar residues; sequence MTSDRSSILTSHS. The 198-residue stretch at 375-572 folds into the DH domain; that stretch reads KLHYAAVEFL…ENVTQAVNQK (198 aa). The PH domain occupies 593-696; sequence NVLEPGRVLI…WTDDLTKAQY (104 aa). Positions 810, 823, 826, 831, 834, 851, and 854 each coordinate Zn(2+). The FYVE-type; degenerate zinc-finger motif lies at 810–859; sequence CSTEFNIINRRHHCRDCGWLICKFCKGQAPLSKYDFTKQNVCSECFDRHY.

It is found in the cytoplasm. Its subcellular location is the cytoskeleton. Its function is as follows. Activates cdc-42, a member of the Ras-like family of Rho- and Rac proteins, by exchanging bound GDP for free GTP. May play a role in regulating the actin cytoskeleton and cell shape. Required for normal lifespan. The chain is FYVE, RhoGEF and PH domain-containing protein tag-77 from Caenorhabditis elegans.